Here is a 442-residue protein sequence, read N- to C-terminus: NAD kinase 2, mitochondrial (442 aa).

The transit peptide at 1-62 (MTCYRGFLLG…RELAGCGSRA (62 aa)) directs the protein to the mitochondrion. The span at 24 to 36 (RGPGAGGPAARPR) shows a compositional bias: low complexity. The disordered stretch occupies residues 24 to 60 (RGPGAGGPAARPRLGGDGGGRRHLGQGQPRELAGCGS). K76 is subject to N6-acetyllysine; alternate. K76 is subject to N6-succinyllysine; alternate. The residue at position 188 (S188) is a Phosphoserine. K302 is modified (N6-succinyllysine). K317 is subject to N6-acetyllysine; alternate. Position 317 is an N6-succinyllysine; alternate (K317). S367 carries the phosphoserine modification. N6-acetyllysine is present on K397.

The protein belongs to the NAD kinase family. Homodimer. In terms of tissue distribution, widely expressed.

The protein resides in the mitochondrion. The enzyme catalyses NAD(+) + ATP = ADP + NADP(+) + H(+). Inhibited by NADH, NADPH and NADP(+). Mitochondrial NAD(+) kinase that phosphorylates NAD(+) to yield NADP(+). Can use both ATP or inorganic polyphosphate as the phosphoryl donor. Also has weak NADH kinase activity in vitro; however NADH kinase activity is much weaker than the NAD(+) kinase activity and may not be relevant in vivo. This chain is NAD kinase 2, mitochondrial (NADK2), found in Homo sapiens (Human).